The primary structure comprises 273 residues: Octanoyltransferase (273 aa).

The BPL/LPL catalytic domain occupies 35–254; it reads DRVPDTCLLL…HLRDILENAE (220 aa). Residues 73 to 80, 184 to 186, and 197 to 199 contribute to the substrate site; these read RGGKITWH, AIG, and GFA. Cysteine 215 (acyl-thioester intermediate) is an active-site residue.

Belongs to the LipB family.

Its subcellular location is the cytoplasm. The enzyme catalyses octanoyl-[ACP] + L-lysyl-[protein] = N(6)-octanoyl-L-lysyl-[protein] + holo-[ACP] + H(+). It functions in the pathway protein modification; protein lipoylation via endogenous pathway; protein N(6)-(lipoyl)lysine from octanoyl-[acyl-carrier-protein]: step 1/2. Catalyzes the transfer of endogenously produced octanoic acid from octanoyl-acyl-carrier-protein onto the lipoyl domains of lipoate-dependent enzymes. Lipoyl-ACP can also act as a substrate although octanoyl-ACP is likely to be the physiological substrate. In Streptomyces griseus subsp. griseus (strain JCM 4626 / CBS 651.72 / NBRC 13350 / KCC S-0626 / ISP 5235), this protein is Octanoyltransferase.